The following is a 310-amino-acid chain: Haloalkane dehalogenase (310 aa).

The 247-residue stretch at 49–295 (VFLCLHGEPT…DAGHFVQEFG (247 aa)) folds into the AB hydrolase-1 domain. D124 acts as the Nucleophile in catalysis. W125 and W175 together coordinate chloride. D260 functions as the Proton donor in the catalytic mechanism. H289 serves as the catalytic Proton acceptor.

Belongs to the haloalkane dehalogenase family. Type 1 subfamily. Monomer.

The catalysed reaction is 1-haloalkane + H2O = a halide anion + a primary alcohol + H(+). The enzyme catalyses 1,2-dichloroethane + H2O = 2-chloroethanol + chloride + H(+). It participates in xenobiotic degradation; 1,2-dichloroethane degradation; glycolate from 1,2-dichloroethane: step 1/4. Its activity is regulated as follows. Inhibited by thiol reagents such as p-chloromercuribenzoate and iodoacetamide. Catalyzes hydrolytic cleavage of carbon-halogen bonds in halogenated aliphatic compounds, leading to the formation of the corresponding primary alcohols, halide ions and protons. Has a broad substrate specificity, which includes terminally mono- and di- chlorinated and brominated alkanes (up to C4 only). The highest activity was found with 1,2-dichloroethane, 1,3-dichloropropane, and 1,2-dibromoethane. This Xanthobacter autotrophicus protein is Haloalkane dehalogenase (dhlA).